We begin with the raw amino-acid sequence, 270 residues long: Orotidine 5'-phosphate decarboxylase (270 aa).

Residues Asp-39, 61–63 (KTH), 93–102 (DRKFADIGNT), Tyr-221, and Arg-239 contribute to the substrate site. The Proton donor role is filled by Lys-95.

This sequence belongs to the OMP decarboxylase family.

The catalysed reaction is orotidine 5'-phosphate + H(+) = UMP + CO2. The protein operates within pyrimidine metabolism; UMP biosynthesis via de novo pathway; UMP from orotate: step 2/2. This Candida albicans (strain SC5314 / ATCC MYA-2876) (Yeast) protein is Orotidine 5'-phosphate decarboxylase (URA3).